A 191-amino-acid chain; its full sequence is MKKLFLIIGAPGSGKTTDASMIAANDDKFAHYSTGDLLRAEVASGSELGKLIDSFISKGNLVPLEVVVNTIISAIRSSDKNYILIDGYPRSEEQMRELDRVLASQSEVKLDGVIEVDVSEEVARNRVLGRARGADDNNEVFNNRMKVYLDPIKEIRAFYNDKKILHMINGERTIETIVADMKNLIENLIKG.

Residue 12-17 participates in ATP binding; it reads GSGKTT. Residues 33–62 form an NMP region; it reads STGDLLRAEVASGSELGKLIDSFISKGNLV. AMP is bound by residues threonine 34, arginine 39, 60–62, 87–90, and glutamine 94; these read NLV and GYPR. Positions 129-135 are LID; that stretch reads GRARGAD. Arginine 130 lines the ATP pocket. The AMP site is built by arginine 132 and arginine 144. Arginine 172 is a binding site for ATP.

Belongs to the adenylate kinase family. In terms of assembly, monomer.

The protein localises to the cytoplasm. It carries out the reaction AMP + ATP = 2 ADP. It participates in purine metabolism; AMP biosynthesis via salvage pathway; AMP from ADP: step 1/1. In terms of biological role, catalyzes the reversible transfer of the terminal phosphate group between ATP and AMP. Plays an important role in cellular energy homeostasis and in adenine nucleotide metabolism. This is Adenylate kinase from Campylobacter fetus subsp. fetus (strain 82-40).